The chain runs to 421 residues: Testin (421 aa).

The PET domain occupies Met92–Asp199. LIM zinc-binding domains follow at residues Tyr234–Glu297, Pro299–Val359, and Gln362–Ser421.

It belongs to the prickle / espinas / testin family. As to quaternary structure, interacts via LIM domain 1 with ZYX. Interacts (via LIM domain 3) with ENAH and VASP. Interacts with ALKBH4, talin, actin, alpha-actinin, GRIP1 and PXN. Interacts (via LIM domain 2) with ACTL7A (via N-terminus). Heterodimer with ACTL7A; the heterodimer interacts with ENAH to form a heterotrimer.

Its subcellular location is the cytoplasm. It is found in the cell junction. The protein resides in the focal adhesion. Scaffold protein that may play a role in cell adhesion, cell spreading and in the reorganization of the actin cytoskeleton. Plays a role in the regulation of cell proliferation. May act as a tumor suppressor. This Loxodonta africana (African elephant) protein is Testin (TES).